We begin with the raw amino-acid sequence, 695 residues long: Nucleoprotein (695 aa).

2 coiled-coil regions span residues 316-341 (VNVG…RRHE) and 372-400 (QTLA…EDQG). Disordered stretches follow at residues 426-458 (RSIN…SFVD) and 472-611 (TLEN…EDTR). The span at 474–484 (ENSVMAPSTTL) shows a compositional bias: polar residues. Basic and acidic residues predominate over residues 502-516 (ISQKKQGNESTDPAR). A compositionally biased stretch (acidic residues) spans 529-547 (QEDDESEYTTDSQESDDQP). The short motif at 603–606 (PSAP) is the PTAP/PSAP motif element.

The protein belongs to the filoviruses nucleoprotein family. In terms of assembly, homooligomer. Homomultimerizes to form the nucleocapsid. Binds to viral genomic RNA. Interacts with VP35 and VP30 to form the nucleocapsid. Also interacts with VP24 and VP40. Post-translationally, phosphorylated.

It is found in the virion. The protein localises to the host cytoplasm. Encapsidates the genome, protecting it from nucleases. The encapsidated genomic RNA is termed the nucleocapsid and serves as template for transcription and replication. During replication, encapsidation by NP is coupled to RNA synthesis and all replicative products are resistant to nucleases. This Lake Victoria marburgvirus (strain Ravn-87) (MARV) protein is Nucleoprotein (NP).